Consider the following 179-residue polypeptide: Large ribosomal subunit protein uL6 (179 aa).

This sequence belongs to the universal ribosomal protein uL6 family. Part of the 50S ribosomal subunit.

Functionally, this protein binds to the 23S rRNA, and is important in its secondary structure. It is located near the subunit interface in the base of the L7/L12 stalk, and near the tRNA binding site of the peptidyltransferase center. The chain is Large ribosomal subunit protein uL6 from Prochlorococcus marinus (strain MIT 9312).